Reading from the N-terminus, the 292-residue chain is Ventral anterior homeobox 2 (292 aa).

Residues 1-36 show a composition bias toward basic and acidic residues; sequence MGDGGAERDRGPKRREEPGGRSGCRGEHRGAEDLRA. The segment at 1–74 is disordered; sequence MGDGGAERDR…DGQQALGETD (74 aa). The span at 38–55 shows a compositional bias: polar residues; the sequence is TGSTSPREIAGTSASSPA. A DNA-binding region (homeobox) is located at residues 102–161; it reads PKRTRTSFTAEQLYRLEMEFQRCQYVVGRERTELARQLNLSETQVKVWFQNRRTKQKKDQ. Positions 212 to 241 are disordered; sequence AGHRGTSLGDPRNSSQRLNPMPSASASSPL.

It belongs to the EMX homeobox family.

Its subcellular location is the nucleus. Its function is as follows. Transcription factor that may function in dorsoventral specification of the forebrain. Regulates the expression of Wnt signaling antagonists including the expression of a truncated TCF7L2 isoform that cannot bind CTNNB1 and acts therefore as a potent dominant-negative Wnt antagonist. Plays a crucial role in eye development and, in particular, in the specification of the ventral optic vesicle. May be a regulator of axial polarization in the retina. This chain is Ventral anterior homeobox 2 (Vax2), found in Rattus norvegicus (Rat).